The following is a 418-amino-acid chain: 26S proteasome regulatory subunit 6B (418 aa).

At M1 the chain carries N-acetylmethionine. The residue at position 21 (S21) is a Phosphoserine. Position 25 is a phosphothreonine (T25). Position 28 is a phosphoserine (S28). 206–213 (GPPGCGKT) lines the ATP pocket. 2 positions are modified to N6-acetyllysine: K397 and K401.

The protein belongs to the AAA ATPase family. As to quaternary structure, component of the 19S proteasome regulatory particle complex. The 26S proteasome consists of a 20S core particle (CP) and two 19S regulatory subunits (RP). The regulatory particle is made of a lid composed of 9 subunits, a base containing 6 ATPases including PSMC4 and few additional components. Interacts with NR1I3. Interacts with PAAF1. Interacts with TRIM5. Interacts with ZFAND1.

Its subcellular location is the cytoplasm. It is found in the nucleus. Functionally, component of the 26S proteasome, a multiprotein complex involved in the ATP-dependent degradation of ubiquitinated proteins. This complex plays a key role in the maintenance of protein homeostasis by removing misfolded or damaged proteins, which could impair cellular functions, and by removing proteins whose functions are no longer required. Therefore, the proteasome participates in numerous cellular processes, including cell cycle progression, apoptosis, or DNA damage repair. PSMC4 belongs to the heterohexameric ring of AAA (ATPases associated with diverse cellular activities) proteins that unfolds ubiquitinated target proteins that are concurrently translocated into a proteolytic chamber and degraded into peptides. The chain is 26S proteasome regulatory subunit 6B (Psmc4) from Mus musculus (Mouse).